We begin with the raw amino-acid sequence, 903 residues long: Calcium-activated chloride channel regulator 1 (903 aa).

An N-terminal signal peptide occupies residues 1–21; sequence MVPRLTVILFLTLHLLPGMKS. A metalloprotease domain region spans residues 45-199; that stretch reads DEKLIQNIKE…HITGTNVIVK (155 aa). H155 contributes to the Zn(2+) binding site. The active site involves E156. Zn(2+) contacts are provided by H159 and D166. One can recognise a VWFA domain in the interval 308–476; sequence VVCLVLDKSG…NGLTNAFSRI (169 aa). N360, N372, N504, and N842 each carry an N-linked (GlcNAc...) asparagine glycan. Residues 883-903 traverse the membrane as a helical segment; the sequence is GTKISAINLAIFALAMILSIV.

The protein belongs to the CLCR family. In terms of processing, glycosylated. The 125-kDa product is autoproteolytically processed by the metalloprotease domain and yields to two cell-surface-associated subunits, a 90-kDa protein and a group of 37- to 41-kDa proteins. The cleavage is necessary for calcium-activated chloride channel (CaCC) activation activity. Trachea.

The protein resides in the apical cell membrane. May be involved in mediating calcium-activated chloride conductance. May play critical roles in goblet cell metaplasia, mucus hypersecretion, cystic fibrosis and AHR. May be involved in the regulation of mucus production and/or secretion by goblet cells. Involved in the regulation of tissue inflammation in the innate immune response. May play a role as a tumor suppressor. Induces MUC5AC. This chain is Calcium-activated chloride channel regulator 1, found in Bos taurus (Bovine).